Reading from the N-terminus, the 245-residue chain is 4-hydroxy-tetrahydrodipicolinate reductase (245 aa).

NAD(+)-binding positions include 7-12 (GARGKV), 75-77 (GTT), and 102-105 (APNF). H132 functions as the Proton donor/acceptor in the catalytic mechanism. A (S)-2,3,4,5-tetrahydrodipicolinate-binding site is contributed by H133. The active-site Proton donor is the K136. A (S)-2,3,4,5-tetrahydrodipicolinate-binding site is contributed by 142 to 143 (GT).

It belongs to the DapB family.

The protein localises to the cytoplasm. The enzyme catalyses (S)-2,3,4,5-tetrahydrodipicolinate + NAD(+) + H2O = (2S,4S)-4-hydroxy-2,3,4,5-tetrahydrodipicolinate + NADH + H(+). The catalysed reaction is (S)-2,3,4,5-tetrahydrodipicolinate + NADP(+) + H2O = (2S,4S)-4-hydroxy-2,3,4,5-tetrahydrodipicolinate + NADPH + H(+). The protein operates within amino-acid biosynthesis; L-lysine biosynthesis via DAP pathway; (S)-tetrahydrodipicolinate from L-aspartate: step 4/4. Catalyzes the conversion of 4-hydroxy-tetrahydrodipicolinate (HTPA) to tetrahydrodipicolinate. The sequence is that of 4-hydroxy-tetrahydrodipicolinate reductase from Mycolicibacterium vanbaalenii (strain DSM 7251 / JCM 13017 / BCRC 16820 / KCTC 9966 / NRRL B-24157 / PYR-1) (Mycobacterium vanbaalenii).